A 233-amino-acid polypeptide reads, in one-letter code: Sugar fermentation stimulation protein homolog (233 aa).

The protein belongs to the SfsA family.

This chain is Sugar fermentation stimulation protein homolog, found in Pyrobaculum neutrophilum (strain DSM 2338 / JCM 9278 / NBRC 100436 / V24Sta) (Thermoproteus neutrophilus).